We begin with the raw amino-acid sequence, 264 residues long: Apolipoprotein A-I (264 aa).

Residues 1 to 18 (MRGVLVTLAVLFLTGTQA) form the signal peptide. Repeat copies occupy residues 67-88 (LKLA…EDMA) and 89-110 (PYYK…AELT). The segment at 67-264 (LKLADNLDTL…FLDELQKSVA (198 aa)) is 10 X approximate tandem repeats. One copy of the 3; half-length repeat lies at 111–121 (KDLEEVKEKIR). Tandem repeats lie at residues 122 to 143 (PFLD…QRLT), 144 to 165 (PVAQ…AKLT), 166 to 187 (PVAE…KNLA), 188 to 209 (PYSD…EKGI), and 210 to 231 (PQAS…EKMT). The 9; half-length repeat unit spans residues 232–242 (PLVQEFRERLT). Copy 10 of the repeat occupies 243–264 (PYAENLKNRLISFLDELQKSVA).

Belongs to the apolipoprotein A1/A4/E family. As to quaternary structure, homodimer. In terms of tissue distribution, major protein of plasma HDL, also found in chylomicrons.

It is found in the secreted. In terms of biological role, participates in the reverse transport of cholesterol from tissues to the liver for excretion by promoting cholesterol efflux from tissues and by acting as a cofactor for the lecithin cholesterol acyltransferase (LCAT). This chain is Apolipoprotein A-I (APOA1), found in Gallus gallus (Chicken).